The primary structure comprises 736 residues: DNA ligase (736 aa).

Residues 41–45 (DQEYD), 91–92 (SL), and Glu-125 each bind NAD(+). Lys-127 (N6-AMP-lysine intermediate) is an active-site residue. NAD(+) is bound at residue Arg-148. Residues 170-205 (ELTPLPLAGGAGGGPLDDSGSAPTPDPSRRREGKWN) form a disordered region. Glu-215, Lys-347, and Lys-371 together coordinate NAD(+). Residues Cys-463, Cys-466, Cys-481, and Cys-487 each coordinate Zn(2+). Residues 656-736 (TLDSPVAGKT…GWAEIVAAAG (81 aa)) form the BRCT domain.

It belongs to the NAD-dependent DNA ligase family. LigA subfamily. Mg(2+) serves as cofactor. Requires Mn(2+) as cofactor.

The enzyme catalyses NAD(+) + (deoxyribonucleotide)n-3'-hydroxyl + 5'-phospho-(deoxyribonucleotide)m = (deoxyribonucleotide)n+m + AMP + beta-nicotinamide D-nucleotide.. Functionally, DNA ligase that catalyzes the formation of phosphodiester linkages between 5'-phosphoryl and 3'-hydroxyl groups in double-stranded DNA using NAD as a coenzyme and as the energy source for the reaction. It is essential for DNA replication and repair of damaged DNA. This chain is DNA ligase, found in Erythrobacter litoralis (strain HTCC2594).